Here is a 419-residue protein sequence, read N- to C-terminus: Imidazolonepropionase (419 aa).

The Fe(3+) site is built by H84 and H86. 2 residues coordinate Zn(2+): H84 and H86. 3 residues coordinate 4-imidazolone-5-propanoate: R93, Y156, and H189. Y156 is a binding site for N-formimidoyl-L-glutamate. H254 contacts Fe(3+). H254 is a Zn(2+) binding site. A 4-imidazolone-5-propanoate-binding site is contributed by Q257. Residue D329 participates in Fe(3+) binding. Position 329 (D329) interacts with Zn(2+). Residues N331 and G333 each contribute to the N-formimidoyl-L-glutamate site. T334 contributes to the 4-imidazolone-5-propanoate binding site.

It belongs to the metallo-dependent hydrolases superfamily. HutI family. Monomer. Forms a tightly packed homodimer in the crystal, but this seems to be an artifact of crystallization. Zn(2+) serves as cofactor. Requires Fe(3+) as cofactor.

It is found in the cytoplasm. The enzyme catalyses 4-imidazolone-5-propanoate + H2O = N-formimidoyl-L-glutamate. It functions in the pathway amino-acid degradation; L-histidine degradation into L-glutamate; N-formimidoyl-L-glutamate from L-histidine: step 3/3. Functionally, catalyzes the hydrolytic cleavage of the carbon-nitrogen bond in imidazolone-5-propanoate to yield N-formimidoyl-L-glutamate. It is the third step in the universal histidine degradation pathway. This chain is Imidazolonepropionase, found in Agrobacterium fabrum (strain C58 / ATCC 33970) (Agrobacterium tumefaciens (strain C58)).